A 267-amino-acid chain; its full sequence is 4-hydroxy-tetrahydrodipicolinate reductase (267 aa).

NAD(+) contacts are provided by residues 8–13 and D34; that span reads GAAGRM. NADP(+) is bound at residue R35. NAD(+) is bound by residues 98 to 100 and 122 to 125; these read GTT and AANF. H155 serves as the catalytic Proton donor/acceptor. A (S)-2,3,4,5-tetrahydrodipicolinate-binding site is contributed by H156. Residue K159 is the Proton donor of the active site. 165–166 lines the (S)-2,3,4,5-tetrahydrodipicolinate pocket; that stretch reads GT.

Belongs to the DapB family.

It localises to the cytoplasm. It catalyses the reaction (S)-2,3,4,5-tetrahydrodipicolinate + NAD(+) + H2O = (2S,4S)-4-hydroxy-2,3,4,5-tetrahydrodipicolinate + NADH + H(+). It carries out the reaction (S)-2,3,4,5-tetrahydrodipicolinate + NADP(+) + H2O = (2S,4S)-4-hydroxy-2,3,4,5-tetrahydrodipicolinate + NADPH + H(+). Its pathway is amino-acid biosynthesis; L-lysine biosynthesis via DAP pathway; (S)-tetrahydrodipicolinate from L-aspartate: step 4/4. Its function is as follows. Catalyzes the conversion of 4-hydroxy-tetrahydrodipicolinate (HTPA) to tetrahydrodipicolinate. This Pseudomonas savastanoi pv. phaseolicola (strain 1448A / Race 6) (Pseudomonas syringae pv. phaseolicola (strain 1448A / Race 6)) protein is 4-hydroxy-tetrahydrodipicolinate reductase.